A 164-amino-acid chain; its full sequence is FMN reductase (NADH) RutF (164 aa).

The protein belongs to the non-flavoprotein flavin reductase family. RutF subfamily.

The catalysed reaction is FMNH2 + NAD(+) = FMN + NADH + 2 H(+). In terms of biological role, catalyzes the reduction of FMN to FMNH2 which is used to reduce pyrimidine by RutA via the Rut pathway. The sequence is that of FMN reductase (NADH) RutF from Escherichia coli O6:K15:H31 (strain 536 / UPEC).